The sequence spans 37 residues: Large ribosomal subunit protein bL36 (37 aa).

Belongs to the bacterial ribosomal protein bL36 family.

The polypeptide is Large ribosomal subunit protein bL36 (Desulforudis audaxviator (strain MP104C)).